The chain runs to 988 residues: Transcription regulator srbA precursor (988 aa).

The Cytoplasmic portion of the chain corresponds to 1–427; it reads MSTPGIGGDF…SSWHARAISH (427 aa). 2 disordered regions span residues 53-85 and 108-169; these read AFPETANASPSSPFDLAFISPSASSGREASDAM and GDLN…KKRA. Residues 125–136 show a composition bias toward low complexity; sequence SLSVHSNSPLSS. Residues 165–178 are basic motif; that stretch reads SKKRAHNVIEKRYR. One can recognise a bHLH domain in the interval 165 to 236; the sequence is SKKRAHNVIE…SKATEYIRHL (72 aa). A helix-loop-helix motif region spans residues 179 to 236; the sequence is ANLNEKIAELRDSVPSLRASYKQANGNSGDDDDDGVTSASKLNKASILSKATEYIRHL. A coiled-coil region spans residues 226 to 260; that stretch reads LSKATEYIRHLEIRNKRLEEENTALKIRLRQLDKA. Positions 267–291 are enriched in polar residues; it reads SAASVSSPSDCTVSTESGASSSPSV. A disordered region spans residues 267-313; it reads SAASVSSPSDCTVSTESGASSSPSVFSHAEDVPSDHSPTSSHPPEGL. Residues 301–310 show a composition bias toward low complexity; it reads DHSPTSSHPP. The chain crosses the membrane as a helical span at residues 428-447; that stretch reads FLMLAILVVGSAFIVFVYLF. Residues 448-988 are Lumenal-facing; that stretch reads NSDPRRQYSA…SDNLLLSDES (541 aa). The span at 866–881 shows a compositional bias: low complexity; sequence PPSPMSKASDMLSSSS. The tract at residues 866 to 900 is disordered; sequence PPSPMSKASDMLSSSSDDGEDGASQRNNNIIPHPM.

In low oxygen or sterol conditions, undergoes proteolytic cleavage by rhomboid-type protease rbdB and is released as soluble transcription factor from the membrane.

It localises to the endoplasmic reticulum membrane. The protein resides in the nucleus. Its function is as follows. Precursor of the transcription factor srbA, which is embedded in the endoplasmic reticulum membrane. Low oxygen or sterol conditions promote processing of this form, releasing the transcription factor form that translocates into the nucleus and activates transcription of genes required for adaptation to anaerobic growth. Functionally, transcription factor that regulates sterol biosynthesis and hyphal morphology. Plays a critical role in ergosterol biosynthesis, resistance to the azole class of antifungal drugs, and in maintenance of cell polarity. Directly binds erg11A/cyp51A upstream DNA sequence at tandem repeats, called TR34 and TR46, that produce duplicated binding sites. Also mediates regulation of iron acquisition in response to hypoxia and low iron conditions via activation of extra- and intracellular siderophore production. Positively regulates the expression of the other hypoxia adaptation key transcription factor srbB. Required for the azole-sensing and response to azole stress. Binds the high-affinity sites 5'-A-T-C-G/A-T/G-A/G-C/T-G/C-A-T-3' of target promoters. Required for virulence in murine models of invasive pulmonary aspergillosis (IPA). This chain is Transcription regulator srbA precursor, found in Aspergillus fumigatus (strain ATCC MYA-4609 / CBS 101355 / FGSC A1100 / Af293) (Neosartorya fumigata).